A 430-amino-acid chain; its full sequence is Adenylosuccinate synthetase (430 aa).

GTP-binding positions include 12-18 (GDEGKGK) and 40-42 (GHT). D13 (proton acceptor) is an active-site residue. Mg(2+) is bound by residues D13 and G40. IMP is bound by residues 13–16 (DEGK), 38–41 (NAGH), T128, R142, Q223, T238, and R302. H41 functions as the Proton donor in the catalytic mechanism. A substrate-binding site is contributed by 298-304 (TTTGRPR). GTP contacts are provided by residues R304, 330-332 (SID), and 412-414 (SVG).

Belongs to the adenylosuccinate synthetase family. In terms of assembly, homodimer. The cofactor is Mg(2+).

The protein resides in the cytoplasm. The enzyme catalyses IMP + L-aspartate + GTP = N(6)-(1,2-dicarboxyethyl)-AMP + GDP + phosphate + 2 H(+). It participates in purine metabolism; AMP biosynthesis via de novo pathway; AMP from IMP: step 1/2. In terms of biological role, plays an important role in the de novo pathway of purine nucleotide biosynthesis. Catalyzes the first committed step in the biosynthesis of AMP from IMP. The protein is Adenylosuccinate synthetase of Exiguobacterium sibiricum (strain DSM 17290 / CCUG 55495 / CIP 109462 / JCM 13490 / 255-15).